Here is a 101-residue protein sequence, read N- to C-terminus: Small ribosomal subunit protein uS14 (101 aa).

Positions 1–10 are enriched in basic and acidic residues; it reads MAKKSAIEKN. The segment at 1–23 is disordered; the sequence is MAKKSAIEKNNRRKKMTKNAAPK. A compositionally biased stretch (basic residues) spans 11–23; it reads NRRKKMTKNAAPK.

Part of the 30S ribosomal subunit. Contacts proteins S3 and S10.

In terms of biological role, binds 16S rRNA, required for the assembly of 30S particles and may also be responsible for determining the conformation of the 16S rRNA at the A site. The sequence is that of Small ribosomal subunit protein uS14 from Rhodopseudomonas palustris (strain ATCC BAA-98 / CGA009).